Reading from the N-terminus, the 709-residue chain is PP2C-like domain-containing protein CG9801 (709 aa).

Disordered stretches follow at residues 121 to 222 (DCYG…NSER), 503 to 530 (LHPSTPPTRPARQSKAESPPNNAPSRPK), and 678 to 709 (GGGEEHNNGNENGDGGAISPVLQSKEFKETNF). Positions 130–143 (PPVQVATQNSTRLT) are enriched in polar residues. Over residues 182–196 (ANLAAASAGTDAGKA) the composition is skewed to low complexity. A compositionally biased stretch (polar residues) spans 197 to 217 (NSDQNNRNVLNAKTEVSTDGD). The 245-residue stretch at 259–503 (SVSLYETNML…KSASAIYARL (245 aa)) folds into the PPM-type phosphatase domain.

The chain is PP2C-like domain-containing protein CG9801 from Drosophila melanogaster (Fruit fly).